The chain runs to 345 residues: KRR1 small subunit processome component homolog (345 aa).

The KH domain maps to 125 to 193; sequence DIIKIGNLVH…VRDIVLETMN (69 aa). A compositionally biased stretch (basic residues) spans 232-245; sequence NISKRKQPKVKKQK. Disordered stretches follow at residues 232-260 and 273-345; these read NISKRKQPKVKKQKKEYTPFPPSQPESKV and QEQK…ARSS. The stretch at 270–298 forms a coiled coil; sequence FLNQEQKQAKRNQERTEKQKEAAKRQDER. 2 stretches are compositionally biased toward basic and acidic residues: residues 276–302 and 315–330; these read KQAKRNQERTEKQKEAAKRQDERRNKD and RKKEDGSSSSKVDVKA. Residues 331-345 show a composition bias toward basic residues; sequence LKAKLIKANKKARSS.

This sequence belongs to the KRR1 family. Monomer. Component of the ribosomal small subunit (SSU) processome.

The protein localises to the nucleus. The protein resides in the nucleolus. Its function is as follows. Required for 40S ribosome biogenesis. Involved in nucleolar processing of pre-18S ribosomal RNA and ribosome assembly. Binds to RNA. Required for female germline development, cell viability during eye development and for survival of dividing cells and epithelial cells during early wing disk development. This Drosophila melanogaster (Fruit fly) protein is KRR1 small subunit processome component homolog (dbe).